The sequence spans 149 residues: Large ribosomal subunit protein uL13 (149 aa).

Belongs to the universal ribosomal protein uL13 family. Part of the 50S ribosomal subunit.

Functionally, this protein is one of the early assembly proteins of the 50S ribosomal subunit, although it is not seen to bind rRNA by itself. It is important during the early stages of 50S assembly. This Chlorobium limicola (strain DSM 245 / NBRC 103803 / 6330) protein is Large ribosomal subunit protein uL13.